A 583-amino-acid chain; its full sequence is 1-deoxy-D-xylulose-5-phosphate synthase (583 aa).

Thiamine diphosphate-binding positions include His-74 and 115–117 (GHS). Asp-146 serves as a coordination point for Mg(2+). Thiamine diphosphate is bound by residues 147-148 (GG), Asn-175, Phe-244, and Glu-327. Mg(2+) is bound at residue Asn-175.

Belongs to the transketolase family. DXPS subfamily. As to quaternary structure, homodimer. The cofactor is Mg(2+). Thiamine diphosphate serves as cofactor.

It carries out the reaction D-glyceraldehyde 3-phosphate + pyruvate + H(+) = 1-deoxy-D-xylulose 5-phosphate + CO2. Its pathway is metabolic intermediate biosynthesis; 1-deoxy-D-xylulose 5-phosphate biosynthesis; 1-deoxy-D-xylulose 5-phosphate from D-glyceraldehyde 3-phosphate and pyruvate: step 1/1. Its function is as follows. Catalyzes the acyloin condensation reaction between C atoms 2 and 3 of pyruvate and glyceraldehyde 3-phosphate to yield 1-deoxy-D-xylulose-5-phosphate (DXP). The chain is 1-deoxy-D-xylulose-5-phosphate synthase from Myxococcus xanthus (strain DK1622).